A 438-amino-acid chain; its full sequence is Exodeoxyribonuclease 7 large subunit (438 aa).

The segment at 406-438 (ATSTGPTDDIPSSAARLPASPAPDARPASGPES) is disordered.

Belongs to the XseA family. As to quaternary structure, heterooligomer composed of large and small subunits.

It is found in the cytoplasm. The catalysed reaction is Exonucleolytic cleavage in either 5'- to 3'- or 3'- to 5'-direction to yield nucleoside 5'-phosphates.. Bidirectionally degrades single-stranded DNA into large acid-insoluble oligonucleotides, which are then degraded further into small acid-soluble oligonucleotides. The sequence is that of Exodeoxyribonuclease 7 large subunit from Clavibacter sepedonicus (Clavibacter michiganensis subsp. sepedonicus).